A 79-amino-acid polypeptide reads, in one-letter code: UPF0291 protein lp_2062 (79 aa).

This sequence belongs to the UPF0291 family.

The protein localises to the cytoplasm. This chain is UPF0291 protein lp_2062, found in Lactiplantibacillus plantarum (strain ATCC BAA-793 / NCIMB 8826 / WCFS1) (Lactobacillus plantarum).